A 314-amino-acid chain; its full sequence is 2-desacetyl-2-hydroxyethyl bacteriochlorophyllide A dehydrogenase (314 aa).

The protein operates within porphyrin-containing compound metabolism; bacteriochlorophyll biosynthesis (light-independent). Functionally, this protein catalyzes the penultimate step in bacteriochlorophyll a biosynthesis. In Rhodobacter capsulatus (strain ATCC BAA-309 / NBRC 16581 / SB1003), this protein is 2-desacetyl-2-hydroxyethyl bacteriochlorophyllide A dehydrogenase (bchC).